Here is a 257-residue protein sequence, read N- to C-terminus: Small ribosomal subunit protein uS3 (257 aa).

The 71-residue stretch at 40–110 folds into the KH type-2 domain; it reads IRKYLSTKYK…LVSLKVVEVQ (71 aa). The segment at 223 to 257 is disordered; it reads ANKEFSRSSKPKKGSFNRSSRSKNTKPAPKQAVSE. Basic residues predominate over residues 231–246; it reads SKPKKGSFNRSSRSKN.

The protein belongs to the universal ribosomal protein uS3 family. In terms of assembly, part of the 30S ribosomal subunit. Forms a tight complex with proteins S10 and S14.

Its function is as follows. Binds the lower part of the 30S subunit head. Binds mRNA in the 70S ribosome, positioning it for translation. This chain is Small ribosomal subunit protein uS3, found in Ureaplasma parvum serovar 3 (strain ATCC 27815 / 27 / NCTC 11736).